Consider the following 406-residue polypeptide: Phosphopentomutase (406 aa).

6 residues coordinate Mn(2+): aspartate 10, aspartate 305, histidine 310, aspartate 346, histidine 347, and histidine 358.

This sequence belongs to the phosphopentomutase family. The cofactor is Mn(2+).

It is found in the cytoplasm. It catalyses the reaction 2-deoxy-alpha-D-ribose 1-phosphate = 2-deoxy-D-ribose 5-phosphate. The catalysed reaction is alpha-D-ribose 1-phosphate = D-ribose 5-phosphate. Its pathway is carbohydrate degradation; 2-deoxy-D-ribose 1-phosphate degradation; D-glyceraldehyde 3-phosphate and acetaldehyde from 2-deoxy-alpha-D-ribose 1-phosphate: step 1/2. Its function is as follows. Isomerase that catalyzes the conversion of deoxy-ribose 1-phosphate (dRib-1-P) and ribose 1-phosphate (Rib-1-P) to deoxy-ribose 5-phosphate (dRib-5-P) and ribose 5-phosphate (Rib-5-P), respectively. The chain is Phosphopentomutase from Aliivibrio fischeri (strain MJ11) (Vibrio fischeri).